A 161-amino-acid chain; its full sequence is Lipid droplet assembly factor 1 (161 aa).

At 1–43 (MAEEEPSSVSRDLQELQRKLGLLLESFQNNSKVVAFMKSPVGR) the chain is on the cytoplasmic side. A helical membrane pass occupies residues 44 to 61 (FLDRHPFLVLTVLMFVTM). Topologically, residues 62–67 (SAIPVG) are lumenal. Residues 68-87 (FFLLIVVLTSLGALMGAILL) traverse the membrane as a helical segment. Residues 88-93 (EGLVIS) are Cytoplasmic-facing. A helical transmembrane segment spans residues 94 to 110 (VCGLSLLCILCGLGFVS). Topologically, residues 111–116 (LALSGI) are lumenal. A helical transmembrane segment spans residues 117–133 (TMMSYVVVSCLMSYWFS). At 134–161 (PSRPPTQQHANIDSQLAMKFTESEKLGL) the chain is on the cytoplasmic side.

The protein belongs to the LDAF1 family. Interacts with BSCL2/seipin to form an oligomeric complex.

It is found in the endoplasmic reticulum membrane. It localises to the lipid droplet. In terms of biological role, plays an important role in the formation of lipid droplets (LD) which are storage organelles at the center of lipid and energy homeostasis. In association with BSCL2/seipin, defines the sites of LD formation in the endoplasmic reticulum. The sequence is that of Lipid droplet assembly factor 1 from Rattus norvegicus (Rat).